Consider the following 340-residue polypeptide: NAD kinase (340 aa).

Aspartate 66 functions as the Proton acceptor in the catalytic mechanism. Residues 66-67, arginine 71, 141-142, lysine 152, aspartate 171, 182-187, and alanine 206 contribute to the NAD(+) site; these read DG, ND, and TAYAFS. The tract at residues 321–340 is disordered; the sequence is AGVAGTEPDKPGERDGKAGS. A compositionally biased stretch (basic and acidic residues) spans 327–340; sequence EPDKPGERDGKAGS.

This sequence belongs to the NAD kinase family. The cofactor is a divalent metal cation.

It localises to the cytoplasm. It catalyses the reaction NAD(+) + ATP = ADP + NADP(+) + H(+). Involved in the regulation of the intracellular balance of NAD and NADP, and is a key enzyme in the biosynthesis of NADP. Catalyzes specifically the phosphorylation on 2'-hydroxyl of the adenosine moiety of NAD to yield NADP. The protein is NAD kinase of Bifidobacterium longum (strain DJO10A).